A 350-amino-acid chain; its full sequence is Nicotinate-nucleotide--dimethylbenzimidazole phosphoribosyltransferase (350 aa).

Catalysis depends on E316, which acts as the Proton acceptor.

Belongs to the CobT family.

The catalysed reaction is 5,6-dimethylbenzimidazole + nicotinate beta-D-ribonucleotide = alpha-ribazole 5'-phosphate + nicotinate + H(+). Its pathway is nucleoside biosynthesis; alpha-ribazole biosynthesis; alpha-ribazole from 5,6-dimethylbenzimidazole: step 1/2. In terms of biological role, catalyzes the synthesis of alpha-ribazole-5'-phosphate from nicotinate mononucleotide (NAMN) and 5,6-dimethylbenzimidazole (DMB). The chain is Nicotinate-nucleotide--dimethylbenzimidazole phosphoribosyltransferase from Bradyrhizobium diazoefficiens (strain JCM 10833 / BCRC 13528 / IAM 13628 / NBRC 14792 / USDA 110).